Reading from the N-terminus, the 90-residue chain is U-scoloptoxin(15)-Sa3a (90 aa).

Positions 1-18 are cleaved as a signal peptide; that stretch reads MKMVYLGLFLIITSCVIS.

Belongs to the scoloptoxin-15 family. In terms of processing, contains 3 disulfide bonds. Expressed by the venom gland.

The protein localises to the secreted. This Scolopendra alternans (Florida Keys giant centipede) protein is U-scoloptoxin(15)-Sa3a.